A 380-amino-acid chain; its full sequence is 1-deoxy-D-xylulose 5-phosphate reductoisomerase (380 aa).

NADPH is bound by residues T10, G11, S12, I13, G36, R37, N38, and N120. K121 contributes to the 1-deoxy-D-xylulose 5-phosphate binding site. Residue E122 coordinates NADPH. Mn(2+) is bound at residue D146. S147, E148, S172, and H195 together coordinate 1-deoxy-D-xylulose 5-phosphate. E148 provides a ligand contact to Mn(2+). G201 contacts NADPH. S208, N213, K214, and E217 together coordinate 1-deoxy-D-xylulose 5-phosphate. E217 contributes to the Mn(2+) binding site.

It belongs to the DXR family. It depends on Mg(2+) as a cofactor. Requires Mn(2+) as cofactor.

The catalysed reaction is 2-C-methyl-D-erythritol 4-phosphate + NADP(+) = 1-deoxy-D-xylulose 5-phosphate + NADPH + H(+). Its pathway is isoprenoid biosynthesis; isopentenyl diphosphate biosynthesis via DXP pathway; isopentenyl diphosphate from 1-deoxy-D-xylulose 5-phosphate: step 1/6. In terms of biological role, catalyzes the NADPH-dependent rearrangement and reduction of 1-deoxy-D-xylulose-5-phosphate (DXP) to 2-C-methyl-D-erythritol 4-phosphate (MEP). The chain is 1-deoxy-D-xylulose 5-phosphate reductoisomerase from Listeria monocytogenes serotype 4a (strain HCC23).